A 198-amino-acid chain; its full sequence is Recombination protein RecR (198 aa).

The C4-type zinc finger occupies C57–C72. The Toprim domain maps to S80–P175.

It belongs to the RecR family.

May play a role in DNA repair. It seems to be involved in an RecBC-independent recombinational process of DNA repair. It may act with RecF and RecO. In Oceanobacillus iheyensis (strain DSM 14371 / CIP 107618 / JCM 11309 / KCTC 3954 / HTE831), this protein is Recombination protein RecR.